Consider the following 275-residue polypeptide: Voltage-dependent calcium channel gamma-7 subunit (275 aa).

Helical transmembrane passes span 8–28, 103–123, 129–149, and 179–199; these read ALTL…GIAV, FPMV…IGHI, ILAF…VVGL, and FAFA…SVYL. Phosphoserine occurs at positions 222, 225, and 273.

It belongs to the PMP-22/EMP/MP20 family. CACNG subfamily. As to quaternary structure, interacts with CACNA1C. Identified in a complex with the L-type calcium channel subunits CACNA1C, CACNA2D1 and either CACNB1 or CACNB2. Acts as an auxiliary subunit for AMPA-selective glutamate receptors (AMPARs), such as GRIA1 and GRIA2. Detected in heart left ventricle. Widely expressed.

It is found in the cell membrane. In terms of biological role, regulates the activity of L-type calcium channels that contain CACNA1C as pore-forming subunit. Regulates the trafficking and gating properties of AMPA-selective glutamate receptors (AMPARs). Promotes their targeting to the cell membrane and synapses and modulates their gating properties by slowing their rates of activation, deactivation and desensitization and by mediating their resensitization. Displays subunit-specific AMPA receptor regulation. Shows specificity only for GRIA1 and GRIA2. This is Voltage-dependent calcium channel gamma-7 subunit (CACNG7) from Homo sapiens (Human).